Reading from the N-terminus, the 329-residue chain is MSAYIIETLIKILILVAVFSALGGFATYIERKVLAYFQRRLGPCYVGPFGLLQVAADGIKLFTKEDIIPQGANKFIFTLAPIIAMVSAFVSMAPIPFFPNFTLFGYEIKPLISDINIGFLFFLAVGAAGIYAPILAGLASNNKYSLIGSARATIQLLSFEVVSTLTILAPLMVVGSLSLVEINNYQSGGFLDWLVFKQPLAFVLFLIASYAELNRTPFDLLEHEAEIVAGYCTEYSGLKWGMFFLAEYAHLFAFSFVISIVFFGGFNAWGFIPGGIAILIKAGFFVFLSMWVRATYPHVRPDQLMNMCWKIMLPLALLNIVLTGIIILI.

9 helical membrane-spanning segments follow: residues 9 to 29, 42 to 62, 75 to 95, 117 to 137, 154 to 174, 188 to 208, 238 to 258, 269 to 291, and 309 to 329; these read LIKI…ATYI, GPCY…IKLF, FIFT…MAPI, IGFL…ILAG, IQLL…LMVV, GGFL…FLIA, LKWG…SFVI, WGFI…LSMW, and WKIM…IILI.

The protein belongs to the complex I subunit 1 family. As to quaternary structure, NDH-1 is composed of 14 different subunits. Subunits NuoA, H, J, K, L, M, N constitute the membrane sector of the complex.

The protein resides in the cell inner membrane. The enzyme catalyses a quinone + NADH + 5 H(+)(in) = a quinol + NAD(+) + 4 H(+)(out). NDH-1 shuttles electrons from NADH, via FMN and iron-sulfur (Fe-S) centers, to quinones in the respiratory chain. The immediate electron acceptor for the enzyme in this species is believed to be ubiquinone. Couples the redox reaction to proton translocation (for every two electrons transferred, four hydrogen ions are translocated across the cytoplasmic membrane), and thus conserves the redox energy in a proton gradient. This subunit may bind ubiquinone. The chain is NADH-quinone oxidoreductase subunit H from Helicobacter pylori (strain Shi470).